The sequence spans 299 residues: Aspartate carbamoyltransferase catalytic subunit (299 aa).

2 residues coordinate carbamoyl phosphate: R54 and T55. K83 is an L-aspartate binding site. Residues R104, H132, and Q135 each contribute to the carbamoyl phosphate site. L-aspartate is bound by residues R165 and R222. Positions 261 and 262 each coordinate carbamoyl phosphate.

It belongs to the aspartate/ornithine carbamoyltransferase superfamily. ATCase family. Heterooligomer of catalytic and regulatory chains.

The catalysed reaction is carbamoyl phosphate + L-aspartate = N-carbamoyl-L-aspartate + phosphate + H(+). Its pathway is pyrimidine metabolism; UMP biosynthesis via de novo pathway; (S)-dihydroorotate from bicarbonate: step 2/3. In terms of biological role, catalyzes the condensation of carbamoyl phosphate and aspartate to form carbamoyl aspartate and inorganic phosphate, the committed step in the de novo pyrimidine nucleotide biosynthesis pathway. The sequence is that of Aspartate carbamoyltransferase catalytic subunit from Archaeoglobus fulgidus (strain ATCC 49558 / DSM 4304 / JCM 9628 / NBRC 100126 / VC-16).